We begin with the raw amino-acid sequence, 78 residues long: Small ribosomal subunit protein bS16c (78 aa).

The protein belongs to the bacterial ribosomal protein bS16 family.

It localises to the plastid. It is found in the chloroplast. The chain is Small ribosomal subunit protein bS16c from Daucus carota (Wild carrot).